Here is a 184-residue protein sequence, read N- to C-terminus: Signal peptidase complex subunit 3 (184 aa).

Over M1–Q14 the chain is Cytoplasmic. Residues A15–I35 traverse the membrane as a helical; Signal-anchor for type II membrane protein segment. At N36–V184 the chain is on the lumenal side. N-linked (GlcNAc...) asparagine glycosylation is found at N102 and N173.

This sequence belongs to the SPCS3 family. As to quaternary structure, component of the signal peptidase complex (SPC) composed of a catalytic subunit SEC11 and three accessory subunits SPC1, SPC2 and SPC3. The complex induces a local thinning of the ER membrane which is used to measure the length of the signal peptide (SP) h-region of protein substrates. This ensures the selectivity of the complex towards h-regions shorter than 18-20 amino acids. Interacts with SEC11. SPC associates with the translocon complex.

It localises to the endoplasmic reticulum membrane. Its function is as follows. Essential component of the signal peptidase complex (SPC) which catalyzes the cleavage of N-terminal signal sequences from nascent proteins as they are translocated into the lumen of the endoplasmic reticulum. Essential for the SPC catalytic activity, possibly by stabilizing and positioning the active center of the complex close to the lumenal surface. Essential for viability. The polypeptide is Signal peptidase complex subunit 3 (SPC3) (Saccharomyces cerevisiae (strain ATCC 204508 / S288c) (Baker's yeast)).